The primary structure comprises 346 residues: Small ribosomal subunit biogenesis GTPase RsgA (346 aa).

The interval methionine 1–lysine 26 is disordered. Over residues threonine 7 to lysine 20 the composition is skewed to polar residues. In terms of domain architecture, CP-type G spans glutamate 103–phenylalanine 271. GTP contacts are provided by residues asparagine 159–aspartate 162 and glycine 213–serine 221. Residues cysteine 295, cysteine 300, histidine 302, and cysteine 308 each contribute to the Zn(2+) site.

Belongs to the TRAFAC class YlqF/YawG GTPase family. RsgA subfamily. As to quaternary structure, monomer. Associates with 30S ribosomal subunit, binds 16S rRNA. The cofactor is Zn(2+).

The protein resides in the cytoplasm. In terms of biological role, one of several proteins that assist in the late maturation steps of the functional core of the 30S ribosomal subunit. Helps release RbfA from mature subunits. May play a role in the assembly of ribosomal proteins into the subunit. Circularly permuted GTPase that catalyzes slow GTP hydrolysis, GTPase activity is stimulated by the 30S ribosomal subunit. The chain is Small ribosomal subunit biogenesis GTPase RsgA from Haemophilus influenzae (strain PittEE).